A 438-amino-acid chain; its full sequence is Glutamate--tRNA ligase 2 (438 aa).

Positions 6–16 (PSPTGDMHTGN) match the 'HIGH' region motif. The short motif at 231 to 235 (KMSKR) is the 'KMSKS' region element. Lys-234 provides a ligand contact to ATP.

The protein belongs to the class-I aminoacyl-tRNA synthetase family. Glutamate--tRNA ligase type 1 subfamily. In terms of assembly, monomer.

Its subcellular location is the cytoplasm. The catalysed reaction is tRNA(Glu) + L-glutamate + ATP = L-glutamyl-tRNA(Glu) + AMP + diphosphate. Its function is as follows. Catalyzes the attachment of glutamate to tRNA(Glu) in a two-step reaction: glutamate is first activated by ATP to form Glu-AMP and then transferred to the acceptor end of tRNA(Glu). The protein is Glutamate--tRNA ligase 2 of Wolinella succinogenes (strain ATCC 29543 / DSM 1740 / CCUG 13145 / JCM 31913 / LMG 7466 / NCTC 11488 / FDC 602W) (Vibrio succinogenes).